We begin with the raw amino-acid sequence, 185 residues long: Ribosome-recycling factor (185 aa).

This sequence belongs to the RRF family.

The protein resides in the cytoplasm. In terms of biological role, responsible for the release of ribosomes from messenger RNA at the termination of protein biosynthesis. May increase the efficiency of translation by recycling ribosomes from one round of translation to another. The chain is Ribosome-recycling factor from Streptococcus agalactiae serotype V (strain ATCC BAA-611 / 2603 V/R).